A 311-amino-acid polypeptide reads, in one-letter code: 4-hydroxy-3-methylbut-2-enyl diphosphate reductase (311 aa).

Cysteine 12 is a [4Fe-4S] cluster binding site. The (2E)-4-hydroxy-3-methylbut-2-enyl diphosphate site is built by histidine 41 and histidine 74. Residues histidine 41 and histidine 74 each contribute to the dimethylallyl diphosphate site. Residues histidine 41 and histidine 74 each coordinate isopentenyl diphosphate. Cysteine 96 contacts [4Fe-4S] cluster. Residue histidine 124 participates in (2E)-4-hydroxy-3-methylbut-2-enyl diphosphate binding. Histidine 124 is a dimethylallyl diphosphate binding site. Histidine 124 serves as a coordination point for isopentenyl diphosphate. The active-site Proton donor is the glutamate 126. A (2E)-4-hydroxy-3-methylbut-2-enyl diphosphate-binding site is contributed by threonine 167. Position 197 (cysteine 197) interacts with [4Fe-4S] cluster. Positions 225, 226, 227, and 269 each coordinate (2E)-4-hydroxy-3-methylbut-2-enyl diphosphate. Residues serine 225, serine 226, asparagine 227, and serine 269 each coordinate dimethylallyl diphosphate. The isopentenyl diphosphate site is built by serine 225, serine 226, asparagine 227, and serine 269.

The protein belongs to the IspH family. The cofactor is [4Fe-4S] cluster.

The catalysed reaction is isopentenyl diphosphate + 2 oxidized [2Fe-2S]-[ferredoxin] + H2O = (2E)-4-hydroxy-3-methylbut-2-enyl diphosphate + 2 reduced [2Fe-2S]-[ferredoxin] + 2 H(+). The enzyme catalyses dimethylallyl diphosphate + 2 oxidized [2Fe-2S]-[ferredoxin] + H2O = (2E)-4-hydroxy-3-methylbut-2-enyl diphosphate + 2 reduced [2Fe-2S]-[ferredoxin] + 2 H(+). The protein operates within isoprenoid biosynthesis; dimethylallyl diphosphate biosynthesis; dimethylallyl diphosphate from (2E)-4-hydroxy-3-methylbutenyl diphosphate: step 1/1. Its pathway is isoprenoid biosynthesis; isopentenyl diphosphate biosynthesis via DXP pathway; isopentenyl diphosphate from 1-deoxy-D-xylulose 5-phosphate: step 6/6. Catalyzes the conversion of 1-hydroxy-2-methyl-2-(E)-butenyl 4-diphosphate (HMBPP) into a mixture of isopentenyl diphosphate (IPP) and dimethylallyl diphosphate (DMAPP). Acts in the terminal step of the DOXP/MEP pathway for isoprenoid precursor biosynthesis. The polypeptide is 4-hydroxy-3-methylbut-2-enyl diphosphate reductase (Aeromonas hydrophila subsp. hydrophila (strain ATCC 7966 / DSM 30187 / BCRC 13018 / CCUG 14551 / JCM 1027 / KCTC 2358 / NCIMB 9240 / NCTC 8049)).